Reading from the N-terminus, the 398-residue chain is NADH dehydrogenase [ubiquinone] iron-sulfur protein 2 (398 aa).

Positions 261, 267, and 282 each coordinate [4Fe-4S] cluster.

This sequence belongs to the complex I 49 kDa subunit family. In terms of assembly, complex I is composed of about 45 different subunits. This is a component of the iron-sulfur (IP) fragment of the enzyme. [4Fe-4S] cluster is required as a cofactor.

The protein resides in the mitochondrion. It carries out the reaction a ubiquinone + NADH + 5 H(+)(in) = a ubiquinol + NAD(+) + 4 H(+)(out). Its function is as follows. Core subunit of the mitochondrial membrane respiratory chain NADH dehydrogenase (Complex I) that is believed to belong to the minimal assembly required for catalysis. Complex I functions in the transfer of electrons from NADH to the respiratory chain. The immediate electron acceptor for the enzyme is believed to be ubiquinone. Component of the iron-sulfur (IP) fragment of the enzyme. The sequence is that of NADH dehydrogenase [ubiquinone] iron-sulfur protein 2 (NAD7) from Nephroselmis olivacea (Green alga).